Here is a 457-residue protein sequence, read N- to C-terminus: Cation efflux system protein CusC (457 aa).

The N-terminal stretch at 1–17 (MSPCKLLPFCVALALTG) is a signal peptide. The N-palmitoyl cysteine moiety is linked to residue C18. C18 carries S-diacylglycerol cysteine lipidation.

Belongs to the outer membrane factor (OMF) (TC 1.B.17) family. Homotrimer. Component of the cus efflux system composed of CusA, CusB, CusC and CusF.

The protein localises to the cell outer membrane. Forms pores that allow passive diffusion of cations across the outer membrane. Part of a cation efflux system that mediates resistance to copper and silver. In pathogenic strains it allows the bacteria to invade brain microvascular endothelial cells (BMEC) thus allowing it to cross the blood-brain barrier and cause neonatal meningitis. This Escherichia coli (strain K12) protein is Cation efflux system protein CusC (cusC).